The sequence spans 421 residues: 3-isopropylmalate dehydratase large subunit (421 aa).

Positions 301, 361, and 364 each coordinate [4Fe-4S] cluster.

Belongs to the aconitase/IPM isomerase family. LeuC type 2 subfamily. Heterodimer of LeuC and LeuD. It depends on [4Fe-4S] cluster as a cofactor.

The catalysed reaction is (2R,3S)-3-isopropylmalate = (2S)-2-isopropylmalate. The protein operates within amino-acid biosynthesis; L-leucine biosynthesis; L-leucine from 3-methyl-2-oxobutanoate: step 2/4. In terms of biological role, catalyzes the isomerization between 2-isopropylmalate and 3-isopropylmalate, via the formation of 2-isopropylmaleate. The sequence is that of 3-isopropylmalate dehydratase large subunit from Desulfitobacterium hafniense (strain Y51).